The following is a 194-amino-acid chain: Small ribosomal subunit protein eS7 (194 aa).

It belongs to the eukaryotic ribosomal protein eS7 family.

This Caenorhabditis elegans protein is Small ribosomal subunit protein eS7 (rps-7).